The primary structure comprises 369 residues: Transaldolase (369 aa).

The active-site Schiff-base intermediate with substrate is the lysine 140.

Belongs to the transaldolase family. Type 2 subfamily.

It localises to the cytoplasm. It catalyses the reaction D-sedoheptulose 7-phosphate + D-glyceraldehyde 3-phosphate = D-erythrose 4-phosphate + beta-D-fructose 6-phosphate. Its pathway is carbohydrate degradation; pentose phosphate pathway; D-glyceraldehyde 3-phosphate and beta-D-fructose 6-phosphate from D-ribose 5-phosphate and D-xylulose 5-phosphate (non-oxidative stage): step 2/3. Functionally, transaldolase is important for the balance of metabolites in the pentose-phosphate pathway. In Parafrankia sp. (strain EAN1pec), this protein is Transaldolase.